We begin with the raw amino-acid sequence, 269 residues long: uncharacterized protein (269 aa).

Residues 1 to 16 (MTDVPSKPPQTTPPPK) show a composition bias toward pro residues. Disordered regions lie at residues 1–110 (MTDV…TISG) and 157–269 (ILQQ…PTIQ). A compositionally biased stretch (polar residues) spans 21–45 (APTTIFSSPPQLPDRSSLNISHTAS). Residues 46 to 58 (TPTLTPTPLQQQQ) show a composition bias toward low complexity. The span at 80-93 (SFSNSPNRQTQSFI) shows a compositional bias: polar residues. Over residues 159-181 (QQPQQSHSPQQQQQQHTPNHQQP) the composition is skewed to low complexity. The span at 182 to 195 (LSPQQQKDLAQKRS) shows a compositional bias: polar residues. Over residues 198–213 (PLPPRPNKNRPLPTPI) the composition is skewed to pro residues.

This is an uncharacterized protein from Dictyostelium discoideum (Social amoeba).